The following is a 182-amino-acid chain: Ribosome-recycling factor (182 aa).

The protein belongs to the RRF family.

It localises to the cytoplasm. Functionally, responsible for the release of ribosomes from messenger RNA at the termination of protein biosynthesis. May increase the efficiency of translation by recycling ribosomes from one round of translation to another. The protein is Ribosome-recycling factor of Cyanothece sp. (strain PCC 7425 / ATCC 29141).